The sequence spans 122 residues: Large ribosomal subunit protein bL12 (122 aa).

The protein belongs to the bacterial ribosomal protein bL12 family. In terms of assembly, homodimer. Part of the ribosomal stalk of the 50S ribosomal subunit. Forms a multimeric L10(L12)X complex, where L10 forms an elongated spine to which 2 to 4 L12 dimers bind in a sequential fashion. Binds GTP-bound translation factors.

In terms of biological role, forms part of the ribosomal stalk which helps the ribosome interact with GTP-bound translation factors. Is thus essential for accurate translation. In Mesoplasma florum (strain ATCC 33453 / NBRC 100688 / NCTC 11704 / L1) (Acholeplasma florum), this protein is Large ribosomal subunit protein bL12.